The following is a 51-amino-acid chain: Glutamate dehydrogenase (51 aa).

Lys31 contributes to the substrate binding site.

Belongs to the Glu/Leu/Phe/Val dehydrogenases family. Homohexamer.

The protein resides in the mitochondrion matrix. The catalysed reaction is L-glutamate + NAD(+) + H2O = 2-oxoglutarate + NH4(+) + NADH + H(+). The enzyme catalyses L-glutamate + NADP(+) + H2O = 2-oxoglutarate + NH4(+) + NADPH + H(+). Its function is as follows. Mitochondrial glutamate dehydrogenase that converts L-glutamate into alpha-ketoglutarate. Plays a key role in glutamine anaplerosis by producing alpha-ketoglutarate, an important intermediate in the tricarboxylic acid cycle. This is Glutamate dehydrogenase from Electrophorus electricus (Electric eel).